We begin with the raw amino-acid sequence, 211 residues long: Small ribosomal subunit protein uS4 (211 aa).

Residues 98-161 (RRLDNVVYRL…RDIPFIKENL (64 aa)) form the S4 RNA-binding domain.

This sequence belongs to the universal ribosomal protein uS4 family. Part of the 30S ribosomal subunit. Contacts protein S5. The interaction surface between S4 and S5 is involved in control of translational fidelity.

One of the primary rRNA binding proteins, it binds directly to 16S rRNA where it nucleates assembly of the body of the 30S subunit. Its function is as follows. With S5 and S12 plays an important role in translational accuracy. In Aquifex aeolicus (strain VF5), this protein is Small ribosomal subunit protein uS4.